The following is a 515-amino-acid chain: MATITFDSLNPVTVAISAGFLLLLIIFVKSRTGSSKRKPPGPPGWPIFGNMFDLGDLPHQTLYKLKSKYGPIVWLQLGSINTMVVQNAVSAAELFKKHDVPFCDRKVPDTLTAFNFNQGSLGMNTYGGHWRVLRRLCSMEFLVNKRMNETTDLRRRIEDNMVRWIEEDSLASKAQGGTGAVQLSRFLFLMAFNLVGNLMLSRDLMDNKDPEGREFFDCMNEILELAGTPNIADFLPLLKKLDPLGMKKRMVDNMSRTMKISSKFVQERLDNRKAGKINEKKDFLDVMLEYQGDGKDGPDKFTEQHVNIVIMEMFFAGSETTSISIEWGFTELLRNPHAFKKVREEIDRVVGVNRMVEETDMENLPYLQAVVKETLRLHPALPMLLPRNTMEDTEYMGYLIPKGTQVFVNAWAIGRDPEYWQDPLSFKPERFINSSVEYKGQHFELIPFGSGRRICVGFPLAHRVVHLTLATLVQAFDWDLGAGVKPQDIDLEERLGLTLRKKNPLNVIPKKRVHI.

2 consecutive transmembrane segments (helical) span residues 8–28 and 180–200; these read SLNP…IIFV and AVQL…NLML. Cysteine 455 is a binding site for heme.

Belongs to the cytochrome P450 family. In terms of tissue distribution, expressed in the leaf internal phloem-associated parenchyma (IPAP) inside the mesophyll.

It is found in the endoplasmic reticulum membrane. The catalysed reaction is (+)-cis-trans-nepetalactol + 3 reduced [NADPH--hemoprotein reductase] + 3 O2 = 7-deoxyloganetate + 3 oxidized [NADPH--hemoprotein reductase] + 4 H2O + 4 H(+). The protein operates within alkaloid biosynthesis. In terms of biological role, component of the seco-iridoid and derivatives monoterpenoid indole alkaloids (MIAs, e.g. vincristine, quinine, and strychnine) biosynthesis pathway. Catalyzes the conversion of cis-trans-nepetalactol (iridodial) into 7-deoxyloganetic acid. Also converts iridotrial into 7-deoxyloganetic acid. This is Iridoid oxidase from Catharanthus roseus (Madagascar periwinkle).